Here is a 346-residue protein sequence, read N- to C-terminus: Holliday junction branch migration complex subunit RuvB (346 aa).

Positions 1–183 (MTEQRIIASS…FGIVQRLEFY (183 aa)) are large ATPase domain (RuvB-L). Residues Ile-22, Arg-23, Gly-64, Lys-67, Thr-68, Thr-69, 130–132 (EDF), Arg-173, Tyr-183, and Arg-220 contribute to the ATP site. Position 68 (Thr-68) interacts with Mg(2+). The segment at 184–254 (SPQELTRIVI…VAQAAMQMLK (71 aa)) is small ATPAse domain (RuvB-S). The tract at residues 257–346 (PEGFDELDRR…PGIGEPGDLF (90 aa)) is head domain (RuvB-H). Arg-293, Arg-312, and Arg-317 together coordinate DNA.

Belongs to the RuvB family. As to quaternary structure, homohexamer. Forms an RuvA(8)-RuvB(12)-Holliday junction (HJ) complex. HJ DNA is sandwiched between 2 RuvA tetramers; dsDNA enters through RuvA and exits via RuvB. An RuvB hexamer assembles on each DNA strand where it exits the tetramer. Each RuvB hexamer is contacted by two RuvA subunits (via domain III) on 2 adjacent RuvB subunits; this complex drives branch migration. In the full resolvosome a probable DNA-RuvA(4)-RuvB(12)-RuvC(2) complex forms which resolves the HJ.

The protein localises to the cytoplasm. It catalyses the reaction ATP + H2O = ADP + phosphate + H(+). Its function is as follows. The RuvA-RuvB-RuvC complex processes Holliday junction (HJ) DNA during genetic recombination and DNA repair, while the RuvA-RuvB complex plays an important role in the rescue of blocked DNA replication forks via replication fork reversal (RFR). RuvA specifically binds to HJ cruciform DNA, conferring on it an open structure. The RuvB hexamer acts as an ATP-dependent pump, pulling dsDNA into and through the RuvAB complex. RuvB forms 2 homohexamers on either side of HJ DNA bound by 1 or 2 RuvA tetramers; 4 subunits per hexamer contact DNA at a time. Coordinated motions by a converter formed by DNA-disengaged RuvB subunits stimulates ATP hydrolysis and nucleotide exchange. Immobilization of the converter enables RuvB to convert the ATP-contained energy into a lever motion, pulling 2 nucleotides of DNA out of the RuvA tetramer per ATP hydrolyzed, thus driving DNA branch migration. The RuvB motors rotate together with the DNA substrate, which together with the progressing nucleotide cycle form the mechanistic basis for DNA recombination by continuous HJ branch migration. Branch migration allows RuvC to scan DNA until it finds its consensus sequence, where it cleaves and resolves cruciform DNA. This Xanthomonas axonopodis pv. citri (strain 306) protein is Holliday junction branch migration complex subunit RuvB.